Reading from the N-terminus, the 931-residue chain is 3'-5' exonuclease DinG (931 aa).

An Exonuclease domain is found at Val-7 to Ile-162. Residues Leu-250–Asn-510 enclose the Helicase ATP-binding domain. Ala-284–Thr-291 provides a ligand contact to ATP. The short motif at Asp-462–His-465 is the DEAH box element. The Helicase C-terminal domain maps to Asp-741 to Lys-897.

This sequence belongs to the helicase family. DinG subfamily. Type 2 sub-subfamily.

The protein resides in the cytoplasm. Its function is as follows. 3'-5' exonuclease. The protein is 3'-5' exonuclease DinG of Bacillus subtilis (strain 168).